Reading from the N-terminus, the 429-residue chain is Phosphomethylpyrimidine synthase (429 aa).

Substrate is bound by residues Asn-66, Met-95, Tyr-124, His-163, 185–187 (SRG), 226–229 (DAMR), and Glu-265. His-269 is a Zn(2+) binding site. Substrate is bound at residue Tyr-292. His-333 serves as a coordination point for Zn(2+). The [4Fe-4S] cluster site is built by Cys-409, Cys-412, and Cys-416.

Belongs to the ThiC family. [4Fe-4S] cluster is required as a cofactor.

It carries out the reaction 5-amino-1-(5-phospho-beta-D-ribosyl)imidazole + S-adenosyl-L-methionine = 4-amino-2-methyl-5-(phosphooxymethyl)pyrimidine + CO + 5'-deoxyadenosine + formate + L-methionine + 3 H(+). The protein operates within cofactor biosynthesis; thiamine diphosphate biosynthesis. Its function is as follows. Catalyzes the synthesis of the hydroxymethylpyrimidine phosphate (HMP-P) moiety of thiamine from aminoimidazole ribotide (AIR) in a radical S-adenosyl-L-methionine (SAM)-dependent reaction. This chain is Phosphomethylpyrimidine synthase, found in Methanopyrus kandleri (strain AV19 / DSM 6324 / JCM 9639 / NBRC 100938).